The chain runs to 215 residues: uncharacterized protein (215 aa).

Transmembrane regions (helical) follow at residues 21 to 40 (IIKYLVIFFLFCIISTVLIN), 50 to 69 (LIFSVICLLISLIGFSSVIF), 95 to 117 (FFAIFISSTIGLVFVLPIIYVLF), 122 to 144 (LEIIFFFSSVWMILVLSSSLVVL), 156 to 178 (ANFVGTFIMPLLIPNIIMTGLIL), and 183 to 205 (LQLIFIMIGINLVFLPISFFLSS).

The protein belongs to the CcmB/CycW/HelB family.

It is found in the cell membrane. This is an uncharacterized protein from Rickettsia conorii (strain ATCC VR-613 / Malish 7).